We begin with the raw amino-acid sequence, 224 residues long: Putative O-methyltransferase MUL_4520 (224 aa).

The span at 1–11 shows a compositional bias: polar residues; that stretch reads MHGTDSSSDTP. Residues 1–20 are disordered; sequence MHGTDSSSDTPGQPAPSRAE. S-adenosyl-L-methionine contacts are provided by residues V51, E73, 75–76, S81, D99, and I100; that span reads GT. Substrate is bound at residue D147. Residue D149 coordinates S-adenosyl-L-methionine.

This sequence belongs to the class I-like SAM-binding methyltransferase superfamily. Cation-dependent O-methyltransferase family.

This Mycobacterium ulcerans (strain Agy99) protein is Putative O-methyltransferase MUL_4520.